The chain runs to 814 residues: Protein kinase C-binding protein NELL2 (814 aa).

A signal peptide spans 1–19; it reads MEFILGIFCVIFCLRAGAG. N-linked (GlcNAc...) asparagine glycosylation is found at Asn-51, Asn-223, and Asn-296. One can recognise a Laminin G-like domain in the interval 53 to 226; the sequence is SKAFLFQDTS…SQCPDLNRTC (174 aa). One can recognise a VWFC 1 domain in the interval 270–329; the sequence is RSCTVKGNIYRELESWMDGCKKCTCTNGTAQCETLTCSVPNCLSGFAPAYVPGKCCKECQ. The region spanning 395 to 437 is the EGF-like 1 domain; the sequence is GHDFCSEGHNCVEYSICKNLNDKAVCICRDGFRALREDSAYCE. Disulfide bonds link Cys-399–Cys-411, Cys-405–Cys-420, and Cys-422–Cys-436. Asp-438, Ile-439, and Glu-441 together coordinate Ca(2+). The 42-residue stretch at 438–479 folds into the EGF-like 2; calcium-binding domain; the sequence is DIDECTEGRHYCRENTVCVNTPGSFMCVCQTGYLKIDDYSCT. Intrachain disulfides connect Cys-442–Cys-455, Cys-449–Cys-464, Cys-466–Cys-478, Cys-484–Cys-497, Cys-491–Cys-506, Cys-508–Cys-519, Cys-523–Cys-533, Cys-527–Cys-539, and Cys-541–Cys-550. Positions 457, 458, and 461 each coordinate Ca(2+). The EGF-like 3; calcium-binding domain occupies 480–520; sequence EHNECATNQHSCDENAVCYNTVGGHNCVCQPGYTGNGTVCK. Asn-515 is a glycosylation site (N-linked (GlcNAc...) asparagine). The EGF-like 4 domain maps to 521 to 551; that stretch reads AFCTDGCRNGGTCIAPNICACPQGFTGPSCE. The Ca(2+) site is built by Asp-553, Ile-554, and Glu-556. The region spanning 553-599 is the EGF-like 5; calcium-binding domain; it reads DIDECTEGFVQCDSRANCINLPGWYHCECRDGYHDNGMFSLSGESCE. 3 cysteine pairs are disulfide-bonded: Cys-557–Cys-570, Cys-564–Cys-579, and Cys-581–Cys-598. Positions 572, 573, and 576 each coordinate Ca(2+). 3 residues coordinate Ca(2+): Asp-600, Ile-601, and Glu-603. The region spanning 600–635 is the EGF-like 6; calcium-binding domain; sequence DIDECATGRHSCSNDTVCFNLDGGFDCRCPHGKNCS. Intrachain disulfides connect Cys-604-Cys-617, Cys-611-Cys-626, and Cys-628-Cys-634. Asn-613 carries N-linked (GlcNAc...) asparagine glycosylation. Residues Asn-619, Leu-620, and Gly-623 each contribute to the Ca(2+) site. Asn-633 carries an N-linked (GlcNAc...) asparagine glycan. 2 VWFC domains span residues 636–691 and 696–754; these read GDCT…PECD and SQCL…PRCI.

In terms of assembly, homotrimer.

It localises to the secreted. Functionally, may regulate neuronal differentiation, polarization and axon guidance. The protein is Protein kinase C-binding protein NELL2 (nell2) of Xenopus tropicalis (Western clawed frog).